Here is an 86-residue protein sequence, read N- to C-terminus: Exodeoxyribonuclease 7 small subunit (86 aa).

The tract at residues 1–27 (MQDELFETEKIPPKNTKNAKNAPKKSF) is disordered.

It belongs to the XseB family. In terms of assembly, heterooligomer composed of large and small subunits.

The protein resides in the cytoplasm. It carries out the reaction Exonucleolytic cleavage in either 5'- to 3'- or 3'- to 5'-direction to yield nucleoside 5'-phosphates.. In terms of biological role, bidirectionally degrades single-stranded DNA into large acid-insoluble oligonucleotides, which are then degraded further into small acid-soluble oligonucleotides. This chain is Exodeoxyribonuclease 7 small subunit, found in Helicobacter pylori (strain G27).